The sequence spans 943 residues: MSQDYKTTLNLPATEFPMRGDLPKREPGILARWEEQGLYQQLRDNAAGRPLFVLHDGPPYANGRIHLGHAVNKILKDIIVKSRYLAGFDAPYVPGWDCHGLPIEIAVEKKWGKVGTKLDAVEFRQKCREFAEEQINIQRVDFKRLGVTGDWDNPYKTLSFDFEANEIRALAKVVANGHLVRGAKPVYWCFDCGSALAEAEIEYQEKESPAIDVAYAARDAQAIGQAFGVSVPADVEVAVPIWTTTPWTLPASLAVSLGAEINYVLAEGPAHNGKRRWLVLAAALAERALQRYGVEAVVLHGEADGSALENQLLAHPFYPEREILVLNGEHVSDEDGTGAVHTAPGHGQEDYVVSQKYGLLDKYNAGQVTPIDGRGVYLESTPPAGDVVLAGQHLWKAQEAIVGVLRDNGALLAFHPIRHSYPHCWRHKTPVVFRATPQWFISMDKANLRNDALAAIDTVGWFPSWGKARIQSMVDGRPDWTISRQRTWGVPIALFTHRQTGEIHPRSVELMQQVADRVEAEGIDVWYSLDAAELLGAEAADYEKVTDILDVWFDSGVTHEGVLAARGFGKPADLYLEGSDQHRGWFQSSLLTGVAIDKRAPYKQCLTHGFTVDEHGRKMSKSLGNGIEPQDIMNKLGADILRLWIASADYSNEMSLSQEILKRNADAYRRLRNTARFLLGNLDGFDPAQHLQPLDQMVALDRWIVHRAWELQEKIKAAYDGYNMAEIVQLLLNFCSVDLGSLYLDVTKDRLYTMPTDSSGRRSAQSAMYHIAEAFTRWVAPILTFTADELWGYLPGERAEHVLFTTWYDGLAPLPADAQLNAADFDQLLAVREQVAKVLEPMRANGAIGAALEAEITIAASEEQAARWQPLADELRFLFISGDVQVRPATTDEVFVSAQPTTKAKCVRCWHHRADVGSNADHPELCGRCVSNITGAGEVRSWF.

The short motif at 59–69 is the 'HIGH' region element; it reads PYANGRIHLGH. Glu-577 is an L-isoleucyl-5'-AMP binding site. Residues 618-622 carry the 'KMSKS' region motif; that stretch reads KMSKS. Lys-621 contributes to the ATP binding site. The Zn(2+) site is built by Cys-906, Cys-909, Cys-926, and Cys-929.

It belongs to the class-I aminoacyl-tRNA synthetase family. IleS type 1 subfamily. In terms of assembly, monomer. Requires Zn(2+) as cofactor.

The protein localises to the cytoplasm. It carries out the reaction tRNA(Ile) + L-isoleucine + ATP = L-isoleucyl-tRNA(Ile) + AMP + diphosphate. In terms of biological role, catalyzes the attachment of isoleucine to tRNA(Ile). As IleRS can inadvertently accommodate and process structurally similar amino acids such as valine, to avoid such errors it has two additional distinct tRNA(Ile)-dependent editing activities. One activity is designated as 'pretransfer' editing and involves the hydrolysis of activated Val-AMP. The other activity is designated 'posttransfer' editing and involves deacylation of mischarged Val-tRNA(Ile). In Stenotrophomonas maltophilia (strain R551-3), this protein is Isoleucine--tRNA ligase.